Here is a 100-residue protein sequence, read N- to C-terminus: Gas vesicle protein J (100 aa).

It belongs to the gas vesicle GvpA family. Interacts with GvpA.

Its subcellular location is the gas vesicle. In terms of biological role, a minor component of the gas vesicle, might be involved in nucleating gas vesicle formation. This protein could be important for the shape determination of the gas vesicle. Gas vesicles (GV) are hollow, gas filled proteinaceous nanostructures. During planktonic growth they allow positioning of the organism at a favorable depth for light or nutrient acquisition. Functionally, when a minimal gvp locus (gvpA2-gvpR-gvpN-gvpF-gvpG-gvpL-gvpS-gvpK-gvpJ-gvpT-gvpU, called pNL29) is expressed in E.coli gas vesicles are made. In Priestia megaterium (Bacillus megaterium), this protein is Gas vesicle protein J.